We begin with the raw amino-acid sequence, 86 residues long: BaSO(4)-adsorbing protein 1 (86 aa).

Cystine bridges form between Cys6/Cys22, Cys18/Cys49, and Cys39/Cys54. The tract at residues 58-86 is disordered; the sequence is GDSASNTQNQGGSRRQENEDQGDDEWDRK. Polar residues predominate over residues 59 to 70; that stretch reads DSASNTQNQGGS. The segment covering 76 to 86 has biased composition (acidic residues); that stretch reads EDQGDDEWDRK.

In terms of tissue distribution, salivary gland (at protein level).

It is found in the secreted. In terms of biological role, inhibits lectin and classical pathways of complement system activation in the host with no significant effect on the alternative pathway. Inhibits host extrinsic blood coagulation pathway but not the intrinsic cascade. Binds to neutral and negatively charged membranes in vitro; binding is reduced upon pre-incubation with Ca(2+). The sequence is that of BaSO(4)-adsorbing protein 1 from Ornithodoros savignyi (African eyed tampan).